Reading from the N-terminus, the 259-residue chain is MSSSFLSRPLVSVYVFAMVTMQLLFMQSVLSLNQTNAYLNHICIKGEGIVKGSSYEGSVKSVIDHMSTYLDYGFVNGAGSDGPTNIYAKLQCRADASESKCRSCLATAFSEIRKKCPNYKGRIIWYDNCLLDISSIYTLAEIDYRHIFNMYNAKDVSSDTMAFNKNTRALLYALKEKAISKKELPYRRDYLYSAGEESLGKKKVYAMVQCTKDLSAKNCSVCLSYILSKLPKCCKGKQGGSVLSPSCNFRYELYPFVKT.

An N-terminal signal peptide occupies residues 1–31 (MSSSFLSRPLVSVYVFAMVTMQLLFMQSVLS). 2 Gnk2-homologous domains span residues 37–138 (AYLN…SIYT) and 144–256 (YRHI…LYPF).

It belongs to the cysteine-rich repeat secretory protein family.

It localises to the secreted. This chain is Putative cysteine-rich repeat secretory protein 25 (CRRSP25), found in Arabidopsis thaliana (Mouse-ear cress).